The sequence spans 360 residues: Archaemetzincin-2 (360 aa).

Position 254 (histidine 254) interacts with Zn(2+). The Proton acceptor role is filled by glutamate 255. Histidine 258, histidine 264, cysteine 265, cysteine 270, cysteine 289, and cysteine 292 together coordinate Zn(2+).

This sequence belongs to the peptidase M54 family. Requires Zn(2+) as cofactor.

Functionally, probable zinc metalloprotease. The protein is Archaemetzincin-2 (AMZ2) of Macaca fascicularis (Crab-eating macaque).